A 429-amino-acid polypeptide reads, in one-letter code: Glycine betaine monooxygenase oxygenase subunit (429 aa).

The Rieske domain maps to 56–163; the sequence is WLIAGMTCEI…VKTAGGYIFI (108 aa). [2Fe-2S] cluster-binding residues include cysteine 98, histidine 100, cysteine 118, and histidine 121. Residues histidine 217 and histidine 222 each contribute to the Fe cation site.

The protein belongs to the bacterial ring-hydroxylating dioxygenase alpha subunit family. In terms of assembly, the system is composed of an oxygenase subunit (GbcA) and a reductase subunit (GbcB). Requires [2Fe-2S] cluster as cofactor. Fe cation is required as a cofactor.

The catalysed reaction is glycine betaine + NADH + O2 + H(+) = N,N-dimethylglycine + formaldehyde + NAD(+) + H2O. Functionally, involved in degradation of glycine betaine. Part of a Rieske-type oxygenase system that catalyzes the conversion of glycine betaine (GB) to dimethylglycine (DMG). This subunit is the terminal oxygenase component of the system. In Pseudomonas aeruginosa (strain UCBPP-PA14), this protein is Glycine betaine monooxygenase oxygenase subunit.